A 409-amino-acid chain; its full sequence is Nucleoprotein (409 aa).

Disordered regions lie at residues 1–64 and 167–197; these read MSAG…SNVK and RNSS…VDDD. The segment at 30-161 is RNA-binding; it reads GTGQASWFQS…NNYRWDFIAL (132 aa). The CoV N NTD domain occupies 32–157; that stretch reads GQASWFQSLK…GGPDNNYRWD (126 aa). Residues 176-197 are compositionally biased toward basic and acidic residues; the sequence is ENSRPGSRDSSRGRQRSRVDDD. Ser192 bears the Phosphoserine; by host mark. Positions 217–333 constitute a CoV N CTD domain; that stretch reads SKQKANEMAE…ECVDGVGTRP (117 aa). Residues 228–335 form a dimerization region; that stretch reads KYHKRAIAPG…VDGVGTRPKD (108 aa). Residues Cys322 and Cys325 are joined by a disulfide bond. Positions 327 to 409 are disordered; the sequence is DGVGTRPKDD…GEGAFDDINI (83 aa). Basic and acidic residues predominate over residues 332–349; sequence RPKDDPTPRSRAASKDRN. Thr374 carries the post-translational modification Phosphothreonine; by host.

The protein belongs to the gammacoronavirus nucleocapsid protein family. In terms of assembly, homooligomer. Both monomeric and oligomeric forms interact with RNA. Interacts with protein M. Interacts with NSP3; this interaction serves to tether the genome to the newly translated replicase-transcriptase complex at a very early stage of infection. In terms of processing, ADP-ribosylated. The ADP-ribosylation is retained in the virion during infection. Phosphorylated on serine and threonine residues.

The protein localises to the virion. The protein resides in the host endoplasmic reticulum-Golgi intermediate compartment. It localises to the host Golgi apparatus. Its function is as follows. Packages the positive strand viral genome RNA into a helical ribonucleocapsid (RNP) and plays a fundamental role during virion assembly through its interactions with the viral genome and membrane protein M. Plays an important role in enhancing the efficiency of subgenomic viral RNA transcription as well as viral replication. In Gallus gallus (Chicken), this protein is Nucleoprotein.